Here is a 429-residue protein sequence, read N- to C-terminus: Phosphomethylpyrimidine synthase (429 aa).

Substrate is bound by residues Asn-66, Met-95, Tyr-124, His-163, 185–187, 226–229, and Glu-265; these read SRG and DGLR. Residue His-269 participates in Zn(2+) binding. Substrate is bound at residue Tyr-292. Zn(2+) is bound at residue His-333. The [4Fe-4S] cluster site is built by Cys-407, Cys-410, and Cys-414.

Belongs to the ThiC family. The cofactor is [4Fe-4S] cluster.

The catalysed reaction is 5-amino-1-(5-phospho-beta-D-ribosyl)imidazole + S-adenosyl-L-methionine = 4-amino-2-methyl-5-(phosphooxymethyl)pyrimidine + CO + 5'-deoxyadenosine + formate + L-methionine + 3 H(+). The protein operates within cofactor biosynthesis; thiamine diphosphate biosynthesis. Catalyzes the synthesis of the hydroxymethylpyrimidine phosphate (HMP-P) moiety of thiamine from aminoimidazole ribotide (AIR) in a radical S-adenosyl-L-methionine (SAM)-dependent reaction. In Pyrococcus abyssi (strain GE5 / Orsay), this protein is Phosphomethylpyrimidine synthase.